The sequence spans 396 residues: uncharacterized protein (396 aa).

The next 12 helical transmembrane spans lie at 8 to 28 (TASGMYINYFFLGMVNIILAS), 44 to 64 (ISYVIAAIGFGKLLTYGISGV), 73 to 93 (PLVVASAGIMAVFLVGIPLSP), 97 to 117 (LAFVFALLAGVANSAMDAGTY), 133 to 153 (VLVKAFMSVGAALLPLLITFL), 158 to 178 (MFYGFAFYLPAAVYLLNIIYL), 213 to 233 (ALIIIGFTSTALFTVSQIWLP), 250 to 270 (LLSYYSIGSLASVLLLAVLLN), 276 to 296 (VFITLLYPIITLCTLAVMLTV), 304 to 324 (ITAFFLGFSTAGVFQITITLM), 338 to 358 (IVATASSLASILLPIATGLIA), and 363 to 383 (IAHIFIFDFGIAVIGTAAAAF).

It belongs to the major facilitator superfamily.

The protein localises to the cell membrane. This is an uncharacterized protein from Bacillus subtilis (strain 168).